A 132-amino-acid polypeptide reads, in one-letter code: Acid shock protein (132 aa).

The first 21 residues, 1 to 21, serve as a signal peptide directing secretion; the sequence is MKKVLALVVAAAMGLSSAAFA. Over residues 20-45 the composition is skewed to low complexity; the sequence is FAAETTTSSAAPATATATTTKAAPAK. Positions 20–132 are disordered; the sequence is FAAETTTSSA…AAKPAAQPAA (113 aa). Residues 22 to 90 constitute a propeptide that is removed on maturation; it reads AETTTSSAAP…TTAPVEQKAQ (69 aa). Over residues 62–71 the composition is skewed to basic residues; the sequence is AAKKHHKKAV. Composition is skewed to low complexity over residues 76 to 90 and 100 to 109; these read AAPA…QKAQ and AKPAVAQKAQ. The span at 110-119 shows a compositional bias: basic residues; that stretch reads AAKKHHKKAV.

This sequence belongs to the Asr family. In terms of processing, proteolytic processing gives rise to the active protein.

It localises to the periplasm. Functionally, required for growth and/or survival at acidic conditions. The chain is Acid shock protein from Enterobacter sp. (strain 638).